Reading from the N-terminus, the 451-residue chain is Chromosomal replication initiator protein DnaA (451 aa).

The segment at 1–73 is domain I, interacts with DnaA modulators; the sequence is MQDNLPQIWE…SNALKQTTSK (73 aa). A domain II region spans residues 73-113; it reads KNFEIRFIVPSEEKISKTEESQKKLEGSVNISVASDQFVSN. A domain III, AAA+ region region spans residues 114–330; sequence NLNPKYTFDT…GALIRIVAYS (217 aa). Glycine 158, glycine 160, lysine 161, and threonine 162 together coordinate ATP. The tract at residues 331-451 is domain IV, binds dsDNA; it reads SLTNSEITVE…ERIAKEIKGD (121 aa).

Belongs to the DnaA family. Oligomerizes as a right-handed, spiral filament on DNA at oriC.

The protein localises to the cytoplasm. Functionally, plays an essential role in the initiation and regulation of chromosomal replication. ATP-DnaA binds to the origin of replication (oriC) to initiate formation of the DNA replication initiation complex once per cell cycle. Binds the DnaA box (a 9 base pair repeat at the origin) and separates the double-stranded (ds)DNA. Forms a right-handed helical filament on oriC DNA; dsDNA binds to the exterior of the filament while single-stranded (ss)DNA is stabiized in the filament's interior. The ATP-DnaA-oriC complex binds and stabilizes one strand of the AT-rich DNA unwinding element (DUE), permitting loading of DNA polymerase. After initiation quickly degrades to an ADP-DnaA complex that is not apt for DNA replication. Binds acidic phospholipids. This is Chromosomal replication initiator protein DnaA from Alkaliphilus oremlandii (strain OhILAs) (Clostridium oremlandii (strain OhILAs)).